Here is a 367-residue protein sequence, read N- to C-terminus: MAGNSIGQVFTVTTCGESHGAGLLAIVDGVPPGLALSEADLQIDLDRRKPGTSKYSTQRRESDEVEIISGVFEGKTTGTSIGLLIRNTNQKSKDYGEIKDTFRPGHADYTYSMKYGFRDYRGGGRSSARETAMRVAAGAIAKKYLLERLGVQIRGHVTQIGHEYSDVLNSSTIDWDFVNSNPFFCADADAVSRFETLIDSLRREGTSCGARLEIIASGVPVGLGEPVFDRLDADIAHAMMSINAVKGVEIGDGMAVAGQFGHSSRDEMTPDGFTANHAGGILGGISSGQDIRVSIALKPTSSITTAGKSINTEGEAIEMLTKGRHDPCVGVRATPIAEAMLAIVLLDHYLRHRGQNADIKQPVQSIT.

Arg48 is a binding site for NADP(+). Residues 125-127, 243-244, Gly283, 298-302, and Arg324 contribute to the FMN site; these read RSS, NA, and KPTSS.

Belongs to the chorismate synthase family. Homotetramer. FMNH2 serves as cofactor.

The enzyme catalyses 5-O-(1-carboxyvinyl)-3-phosphoshikimate = chorismate + phosphate. The protein operates within metabolic intermediate biosynthesis; chorismate biosynthesis; chorismate from D-erythrose 4-phosphate and phosphoenolpyruvate: step 7/7. Functionally, catalyzes the anti-1,4-elimination of the C-3 phosphate and the C-6 proR hydrogen from 5-enolpyruvylshikimate-3-phosphate (EPSP) to yield chorismate, which is the branch point compound that serves as the starting substrate for the three terminal pathways of aromatic amino acid biosynthesis. This reaction introduces a second double bond into the aromatic ring system. The chain is Chorismate synthase from Psychrobacter cryohalolentis (strain ATCC BAA-1226 / DSM 17306 / VKM B-2378 / K5).